The sequence spans 371 residues: Queuine tRNA-ribosyltransferase (371 aa).

Residue aspartate 90 is the Proton acceptor of the active site. Substrate contacts are provided by residues 90–94, aspartate 144, glutamine 188, and glycine 215; that span reads DSGGF. Positions 246–252 are RNA binding; that stretch reads GVGTPED. The Nucleophile role is filled by aspartate 265. An RNA binding; important for wobble base 34 recognition region spans residues 270 to 274; it reads TRNAR. Zn(2+) is bound by residues cysteine 303, cysteine 305, cysteine 308, and histidine 334.

It belongs to the queuine tRNA-ribosyltransferase family. In terms of assembly, homodimer. Within each dimer, one monomer is responsible for RNA recognition and catalysis, while the other monomer binds to the replacement base PreQ1. Requires Zn(2+) as cofactor.

The enzyme catalyses 7-aminomethyl-7-carbaguanine + guanosine(34) in tRNA = 7-aminomethyl-7-carbaguanosine(34) in tRNA + guanine. It participates in tRNA modification; tRNA-queuosine biosynthesis. Functionally, catalyzes the base-exchange of a guanine (G) residue with the queuine precursor 7-aminomethyl-7-deazaguanine (PreQ1) at position 34 (anticodon wobble position) in tRNAs with GU(N) anticodons (tRNA-Asp, -Asn, -His and -Tyr). Catalysis occurs through a double-displacement mechanism. The nucleophile active site attacks the C1' of nucleotide 34 to detach the guanine base from the RNA, forming a covalent enzyme-RNA intermediate. The proton acceptor active site deprotonates the incoming PreQ1, allowing a nucleophilic attack on the C1' of the ribose to form the product. After dissociation, two additional enzymatic reactions on the tRNA convert PreQ1 to queuine (Q), resulting in the hypermodified nucleoside queuosine (7-(((4,5-cis-dihydroxy-2-cyclopenten-1-yl)amino)methyl)-7-deazaguanosine). The protein is Queuine tRNA-ribosyltransferase of Chromobacterium violaceum (strain ATCC 12472 / DSM 30191 / JCM 1249 / CCUG 213 / NBRC 12614 / NCIMB 9131 / NCTC 9757 / MK).